The sequence spans 207 residues: Probable GTP-binding protein EngB (207 aa).

In terms of domain architecture, EngB-type G spans 22 to 194 (DLPEVAFAGR…LQRLDVALSD (173 aa)). Residues 30–37 (GRSNVGKS), 57–61 (GRTQL), 75–78 (DLPG), 142–145 (TKVD), and 173–175 (FSA) contribute to the GTP site. Mg(2+) contacts are provided by Ser37 and Thr59.

Belongs to the TRAFAC class TrmE-Era-EngA-EngB-Septin-like GTPase superfamily. EngB GTPase family. It depends on Mg(2+) as a cofactor.

Necessary for normal cell division and for the maintenance of normal septation. The sequence is that of Probable GTP-binding protein EngB from Syntrophotalea carbinolica (strain DSM 2380 / NBRC 103641 / GraBd1) (Pelobacter carbinolicus).